Reading from the N-terminus, the 424-residue chain is WD-40 repeat-containing protein MSI3 (424 aa).

An N-acetylmethionine modification is found at Met1. WD repeat units lie at residues 167–207, 216–256, 259–299, 303–343, and 362–402; these read GHEQ…TDKV, GHQS…MQHQ, VHER…APLH, KHEG…DEQL, and GHKA…YRED. Residues 233-249 carry the DWD box motif; it reads IFGSAGDDCQLVIWDLR. Positions 394-424 are disordered; that stretch reads MAESIYREDDEDEDDDDEGNQNAQHSNENQK. The segment covering 401–412 has biased composition (acidic residues); the sequence is EDDEDEDDDDEG. A compositionally biased stretch (polar residues) spans 413-424; that stretch reads NQNAQHSNENQK.

This sequence belongs to the WD repeat RBAP46/RBAP48/MSI1 family.

It is found in the nucleus. Core histone-binding subunit that may target chromatin assembly factors, chromatin remodeling factors and histone deacetylases to their histone substrates in a manner that is regulated by nucleosomal DNA. This is WD-40 repeat-containing protein MSI3 (MSI3) from Arabidopsis thaliana (Mouse-ear cress).